The sequence spans 536 residues: Inactive phospholipase D5 (536 aa).

Residues 69-89 traverse the membrane as a helical segment; the sequence is IVIFALVCCFAILVALIFSAV. Residue Asn-121 is glycosylated (N-linked (GlcNAc...) asparagine). One can recognise a PLD phosphodiesterase 1 domain in the interval 215 to 242; that stretch reads NKGRLQSSFWIVDKQHVYIGSAGLDWQS. Asn-302 is a glycosylation site (N-linked (GlcNAc...) asparagine). The PLD phosphodiesterase 2 domain maps to 434–460; the sequence is FPRLNRNKYMVTDGAAYIGNFDWVGND.

Belongs to the phospholipase D family.

It is found in the membrane. The sequence is that of Inactive phospholipase D5 (PLD5) from Homo sapiens (Human).